A 540-amino-acid polypeptide reads, in one-letter code: Phenylalanine--tRNA ligase beta subunit (540 aa).

A B5 domain is found at 266–342; the sequence is LRPEKRTVSV…IAYGYDKIET (77 aa). Mg(2+) contacts are provided by D320, D326, E329, and D330.

Belongs to the phenylalanyl-tRNA synthetase beta subunit family. Type 2 subfamily. In terms of assembly, tetramer of two alpha and two beta subunits. Mg(2+) is required as a cofactor.

It localises to the cytoplasm. It catalyses the reaction tRNA(Phe) + L-phenylalanine + ATP = L-phenylalanyl-tRNA(Phe) + AMP + diphosphate + H(+). The polypeptide is Phenylalanine--tRNA ligase beta subunit (Methanocorpusculum labreanum (strain ATCC 43576 / DSM 4855 / Z)).